Reading from the N-terminus, the 1043-residue chain is Isoleucine--tRNA ligase (1043 aa).

The 'HIGH' region signature appears at 49–59 (PFATGLPHYGH). Positions 592-596 (KMSKR) match the 'KMSKS' region motif. Lys-595 lines the ATP pocket.

It belongs to the class-I aminoacyl-tRNA synthetase family. IleS type 2 subfamily. Monomer. Requires Zn(2+) as cofactor.

The protein localises to the cytoplasm. It catalyses the reaction tRNA(Ile) + L-isoleucine + ATP = L-isoleucyl-tRNA(Ile) + AMP + diphosphate. In terms of biological role, catalyzes the attachment of isoleucine to tRNA(Ile). As IleRS can inadvertently accommodate and process structurally similar amino acids such as valine, to avoid such errors it has two additional distinct tRNA(Ile)-dependent editing activities. One activity is designated as 'pretransfer' editing and involves the hydrolysis of activated Val-AMP. The other activity is designated 'posttransfer' editing and involves deacylation of mischarged Val-tRNA(Ile). The protein is Isoleucine--tRNA ligase of Chlamydia caviae (strain ATCC VR-813 / DSM 19441 / 03DC25 / GPIC) (Chlamydophila caviae).